Here is a 255-residue protein sequence, read N- to C-terminus: uncharacterized protein (255 aa).

The first 23 residues, 1–23, serve as a signal peptide directing secretion; that stretch reads MKRLNKLVLGISFLFLVISITAG. Cys24 carries the N-palmitoyl cysteine lipid modification. Cys24 carries the S-diacylglycerol cysteine lipid modification.

It belongs to the staphylococcal tandem lipoprotein family.

The protein resides in the cell membrane. This is an uncharacterized protein from Staphylococcus aureus (strain N315).